The primary structure comprises 426 residues: MNRNEILFDRAKAIIPGGVNSPVRAFGSVGGVPRFIKKAEGAYVWDENGTRYTDYVGSWGPAIVGHAHPEVVEAVREAALGGLSFGAPTEGEIAIAEQIAEIMPSVERLRLVSSGTEATMTAIRLARGFTGRDKIIKFEGCYHGHSDSLLVKAGSGLLTFGNPSSAGVPADFTKHTLVLEYNNIAQLEEAFAQSGDEIACVIVEPFVGNMNLVRPTEAFVKALRGLTEKHGAVLIYDEVMTGFRVALGGAQSLHGITPDLTTMGKVIGGGMPLAAFGGRKDIMECISPLGGVYQAGTLSGNPIAVAAGLKTLEIIQREGFYENLTALTQRLANGIAAAKAHGIEFAADSVGGMFGLYFAAHVPRNYADMARSNIDAFKRFFHGMLDRGIAFGPSAYEAGFVSAAHTPELIDETVAVAVEVFKAMAA.

The residue at position 265 (Lys-265) is an N6-(pyridoxal phosphate)lysine.

Belongs to the class-III pyridoxal-phosphate-dependent aminotransferase family. HemL subfamily. In terms of assembly, homodimer. Pyridoxal 5'-phosphate serves as cofactor.

It localises to the cytoplasm. The enzyme catalyses (S)-4-amino-5-oxopentanoate = 5-aminolevulinate. Its pathway is porphyrin-containing compound metabolism; protoporphyrin-IX biosynthesis; 5-aminolevulinate from L-glutamyl-tRNA(Glu): step 2/2. This chain is Glutamate-1-semialdehyde 2,1-aminomutase, found in Neisseria gonorrhoeae (strain ATCC 700825 / FA 1090).